A 249-amino-acid chain; its full sequence is MGVAFDKCDTRPAHIDAILNGLDRYNPETTTVFQDYVVQQCEERTFDCYANLALLKLYQFNPHLLQPETVTNILTKALTVFPSPAFSLCLALLPAHTQPFPTADTDASQSSDFVESIQKLARLSTLLESAQYAQFWSTLNSDDLYADLVADVAGFEELVRIRIAIEVGKAFREINAEVLEQWLDLRSREALEKFVTEVCSWEVDKAGPNGTVVKVPTNKENEARSEVKSERVGVEMFGRVIRRGFEQAA.

Positions 46–222 (FDCYANLALL…VKVPTNKENE (177 aa)) constitute a PCI domain.

It belongs to the eIF-3 subunit K family. As to quaternary structure, component of the eukaryotic translation initiation factor 3 (eIF-3) complex.

The protein resides in the cytoplasm. Its function is as follows. Component of the eukaryotic translation initiation factor 3 (eIF-3) complex, which is involved in protein synthesis of a specialized repertoire of mRNAs and, together with other initiation factors, stimulates binding of mRNA and methionyl-tRNAi to the 40S ribosome. The eIF-3 complex specifically targets and initiates translation of a subset of mRNAs involved in cell proliferation. The protein is Eukaryotic translation initiation factor 3 subunit K of Neosartorya fischeri (strain ATCC 1020 / DSM 3700 / CBS 544.65 / FGSC A1164 / JCM 1740 / NRRL 181 / WB 181) (Aspergillus fischerianus).